We begin with the raw amino-acid sequence, 309 residues long: D-alanine--D-alanine ligase (309 aa).

One can recognise an ATP-grasp domain in the interval 104-306 (KLLWQSFNLP…YQILVQKILE (203 aa)). 137-192 (ISLLGLPIIVKPNQEGSSIGITIVYSYETLYKACKTAFIFDNSILIEKFIYGEEYT) is a binding site for ATP. Mg(2+) is bound by residues aspartate 260, glutamate 273, and asparagine 275.

The protein belongs to the D-alanine--D-alanine ligase family. It depends on Mg(2+) as a cofactor. The cofactor is Mn(2+).

The protein localises to the cytoplasm. The catalysed reaction is 2 D-alanine + ATP = D-alanyl-D-alanine + ADP + phosphate + H(+). The protein operates within cell wall biogenesis; peptidoglycan biosynthesis. Its function is as follows. Cell wall formation. In Buchnera aphidicola subsp. Baizongia pistaciae (strain Bp), this protein is D-alanine--D-alanine ligase.